A 65-amino-acid chain; its full sequence is VESP-VB1 (65 aa).

The N-terminal stretch at 1 to 23 (MKMSILFLFALIASLACLQLTFA) is a signal peptide. 7 AXPX repeats span residues 23–26 (AAPA), 27–30 (ASPL), 31–34 (ANPG), 35–38 (ASPE), 39–42 (AAPL), 43–46 (ADPL), and 47–50 (ADPF). Residues 24-49 (APAASPLANPGASPEAAPLADPLADP) constitute a propeptide that is removed on maturation. Leucine amide is present on L62.

Expressed by the venom gland.

Its subcellular location is the secreted. Functionally, antimicrobial peptide. Shows activity against both Gram-positive (S.aureus MIC=1.0-3.75 ug/ml) and -negative (E.coli MIC=7.5-15 ug/ml) bacteria, as well against fungi (C.albicans MIC=30 ug/ml). Also promotes important mast cell degranulation. Shows little hemolytic activity on rabbit and human erythrocytes. Its mast cell degranulation activity may be related to the activation of G-protein coupled receptors in mast cells as well as interaction with other proteins located in cell endosomal membranes in the mast cells. The chain is VESP-VB1 from Vespa bicolor (Black shield wasp).